Reading from the N-terminus, the 284-residue chain is uncharacterized protein (284 aa).

Topologically, residues 1–8 (MLWKVSKM) are cytoplasmic. Residues 9-25 (FLGGLVALTTISVATLY) traverse the membrane as a helical segment. Topologically, residues 26–80 (HYQNRLVYPSWAQGARNHVDTPDSRGIPYEKLTLITQDHIKLEAWDIKNENSTST) are extracellular. The helical transmembrane segment at 81-101 (VLILCPNAGNIGYFILIIDIF) threads the bilayer. Residues 102–284 (YRQFGMSVFI…RDFLIEKGFI (183 aa)) lie on the Cytoplasmic side of the membrane.

To S.pombe bem46 and M.tuberculosis Rv2307c.

Its subcellular location is the mitochondrion membrane. This is an uncharacterized protein from Saccharomyces cerevisiae (strain ATCC 204508 / S288c) (Baker's yeast).